The following is a 346-amino-acid chain: S-adenosylmethionine:tRNA ribosyltransferase-isomerase (346 aa).

This sequence belongs to the QueA family. As to quaternary structure, monomer.

It localises to the cytoplasm. It catalyses the reaction 7-aminomethyl-7-carbaguanosine(34) in tRNA + S-adenosyl-L-methionine = epoxyqueuosine(34) in tRNA + adenine + L-methionine + 2 H(+). The protein operates within tRNA modification; tRNA-queuosine biosynthesis. In terms of biological role, transfers and isomerizes the ribose moiety from AdoMet to the 7-aminomethyl group of 7-deazaguanine (preQ1-tRNA) to give epoxyqueuosine (oQ-tRNA). This Cereibacter sphaeroides (strain KD131 / KCTC 12085) (Rhodobacter sphaeroides) protein is S-adenosylmethionine:tRNA ribosyltransferase-isomerase.